We begin with the raw amino-acid sequence, 564 residues long: Adenine deaminase (564 aa).

The protein belongs to the metallo-dependent hydrolases superfamily. Adenine deaminase family. Mn(2+) is required as a cofactor.

It catalyses the reaction adenine + H2O + H(+) = hypoxanthine + NH4(+). In Methylobacterium sp. (strain 4-46), this protein is Adenine deaminase.